A 147-amino-acid chain; its full sequence is Hemoglobin subunit beta-Y (147 aa).

Residues 3 to 147 form the Globin domain; it reads HFTAEEKAAI…VANALSLKYH (145 aa). The heme b site is built by H64 and H93.

It belongs to the globin family. As to quaternary structure, heterotetramer of two alpha chains and two beta chains.

Its function is as follows. This is a minor early embryonic beta chain. The sequence is that of Hemoglobin subunit beta-Y (HBBY) from Mesocricetus auratus (Golden hamster).